A 209-amino-acid chain; its full sequence is Pyroglutamyl-peptidase 1 (209 aa).

Catalysis depends on residues Glu-85, Cys-149, and His-168.

This sequence belongs to the peptidase C15 family. Monomer.

The protein localises to the cytoplasm. The enzyme catalyses Release of an N-terminal pyroglutamyl group from a polypeptide, the second amino acid generally not being Pro.. In terms of biological role, removes 5-oxoproline from various penultimate amino acid residues except L-proline. The chain is Pyroglutamyl-peptidase 1 (Pgpep1) from Rattus norvegicus (Rat).